The primary structure comprises 440 residues: Protein eva-1 homolog C (440 aa).

The span at 1–13 (MLLPGHPRPPPAP) shows a compositional bias: pro residues. The disordered stretch occupies residues 1 to 23 (MLLPGHPRPPPAPQSAQNQGLRR). Positions 1-48 (MLLPGHPRPPPAPQSAQNQGLRRQVEPPGQLLRLFYCTVLVCSKETSA) are cleaved as a signal peptide. Residues 49 to 321 (LTDFSGYLTK…AYIRAHPERA (273 aa)) are Extracellular-facing. Residues asparagine 62, asparagine 109, and asparagine 165 are each glycosylated (N-linked (GlcNAc...) asparagine). The SUEL-type lectin 1 domain occupies 67–159 (ACDGDYLNLQ…KYLLVSFKCQ (93 aa)). Residues 168–260 (VCENQELKLH…KYLTVAYACV (93 aa)) enclose the SUEL-type lectin 2 domain. A helical membrane pass occupies residues 322–342 (ALLFMSSVCIGLLLTLCALVI). The Cytoplasmic portion of the chain corresponds to 343–440 (RVSCTKDFRE…SLPRNVGHFY (98 aa)). Positions 364-384 (SDKAEEDSEEDLEEEDSSDSQ) are disordered. A compositionally biased stretch (acidic residues) spans 367-381 (AEEDSEEDLEEEDSS).

The protein belongs to the EVA1 family. Ubiquitous.

Its subcellular location is the cell membrane. Its function is as follows. Binds heparin. In Mus musculus (Mouse), this protein is Protein eva-1 homolog C (Eva1c).